Consider the following 190-residue polypeptide: Glutathione peroxidase 2 (190 aa).

The active site involves selenocysteine 40. Position 40 (selenocysteine 40) is a non-standard amino acid, selenocysteine.

The protein belongs to the glutathione peroxidase family. In terms of assembly, homotetramer.

It is found in the cytoplasm. The protein resides in the cytosol. It carries out the reaction 2 glutathione + H2O2 = glutathione disulfide + 2 H2O. The enzyme catalyses a hydroperoxy polyunsaturated fatty acid + 2 glutathione = a hydroxy polyunsaturated fatty acid + glutathione disulfide + H2O. It catalyses the reaction tert-butyl hydroperoxide + 2 glutathione = tert-butanol + glutathione disulfide + H2O. The catalysed reaction is cumene hydroperoxide + 2 glutathione = 2-phenylpropan-2-ol + glutathione disulfide + H2O. It carries out the reaction (13S)-hydroperoxy-(9Z,11E)-octadecadienoate + 2 glutathione = (13S)-hydroxy-(9Z,11E)-octadecadienoate + glutathione disulfide + H2O. The enzyme catalyses (5S)-hydroperoxy-(6E,8Z,11Z,14Z)-eicosatetraenoate + 2 glutathione = (5S)-hydroxy-(6E,8Z,11Z,14Z)-eicosatetraenoate + glutathione disulfide + H2O. It catalyses the reaction (12R)-hydroperoxy-(5Z,8Z,10E,14Z)-eicosatetraenoate + 2 glutathione = (12R)-hydroxy-(5Z,8Z,10E,14Z)-eicosatetraenoate + glutathione disulfide + H2O. The catalysed reaction is (15S)-hydroperoxy-(5Z,8Z,11Z,13E)-eicosatetraenoate + 2 glutathione = (15S)-hydroxy-(5Z,8Z,11Z,13E)-eicosatetraenoate + glutathione disulfide + H2O. Its function is as follows. Catalyzes the reduction of hydroperoxides in a glutathione-dependent manner thus regulating cellular redox homeostasis. Can reduce small soluble hydroperoxides such as H2O2, cumene hydroperoxide and tert-butyl hydroperoxide, as well as several fatty acid-derived hydroperoxides. Cannot reduce phosphatidycholine hydroperoxide. The polypeptide is Glutathione peroxidase 2 (Gpx2) (Mus musculus (Mouse)).